Reading from the N-terminus, the 329-residue chain is Biotin synthase (329 aa).

A Radical SAM core domain is found at 48 to 278 (FVGDKVYLCS…SKKISVCGGR (231 aa)). The [4Fe-4S] cluster site is built by Cys66, Cys70, and Cys73. Residues Ser143 and Cys203 each contribute to the [2Fe-2S] cluster site.

The protein belongs to the radical SAM superfamily. Biotin synthase family. In terms of assembly, homodimer. It depends on [4Fe-4S] cluster as a cofactor. Requires [2Fe-2S] cluster as cofactor.

The enzyme catalyses (4R,5S)-dethiobiotin + (sulfur carrier)-SH + 2 reduced [2Fe-2S]-[ferredoxin] + 2 S-adenosyl-L-methionine = (sulfur carrier)-H + biotin + 2 5'-deoxyadenosine + 2 L-methionine + 2 oxidized [2Fe-2S]-[ferredoxin]. It functions in the pathway cofactor biosynthesis; biotin biosynthesis; biotin from 7,8-diaminononanoate: step 2/2. In terms of biological role, catalyzes the conversion of dethiobiotin (DTB) to biotin by the insertion of a sulfur atom into dethiobiotin via a radical-based mechanism. This Geotalea uraniireducens (strain Rf4) (Geobacter uraniireducens) protein is Biotin synthase.